We begin with the raw amino-acid sequence, 295 residues long: Bifunctional protein FolD (295 aa).

Residues 169-171 (GRS), serine 194, and isoleucine 235 contribute to the NADP(+) site.

This sequence belongs to the tetrahydrofolate dehydrogenase/cyclohydrolase family. As to quaternary structure, homodimer.

It catalyses the reaction (6R)-5,10-methylene-5,6,7,8-tetrahydrofolate + NADP(+) = (6R)-5,10-methenyltetrahydrofolate + NADPH. The enzyme catalyses (6R)-5,10-methenyltetrahydrofolate + H2O = (6R)-10-formyltetrahydrofolate + H(+). It functions in the pathway one-carbon metabolism; tetrahydrofolate interconversion. Catalyzes the oxidation of 5,10-methylenetetrahydrofolate to 5,10-methenyltetrahydrofolate and then the hydrolysis of 5,10-methenyltetrahydrofolate to 10-formyltetrahydrofolate. In Acaryochloris marina (strain MBIC 11017), this protein is Bifunctional protein FolD.